A 487-amino-acid chain; its full sequence is Histamine H1 receptor (487 aa).

Residues Met1 to Pro29 lie on the Extracellular side of the membrane. N-linked (GlcNAc...) asparagine glycans are attached at residues Asn5 and Asn18. Residues Leu30–Tyr50 traverse the membrane as a helical segment. Over Ala51–Leu64 the chain is Cytoplasmic. A helical transmembrane segment spans residues Tyr65–Leu89. Over Met90–Arg97 the chain is Extracellular. The helical transmembrane segment at Pro98 to Ile123 threads the bilayer. A disulfide bridge connects residues Cys100 and Cys180. Histamine-binding residues include Asp107 and Thr112. Positions Asp107–Thr112 are important for agonist binding. Over Asp124–Ala144 the chain is Cytoplasmic. Phosphothreonine is present on residues Thr140 and Thr142. Residues Ser145 to Gly164 form a helical membrane-spanning segment. Residues Trp165–Thr188 are Extracellular-facing. Residues Trp189 to Ala211 traverse the membrane as a helical segment. Asn198 is a histamine binding site. The Cytoplasmic segment spans residues Lys212–Gln416. Ser230 is subject to Phosphoserine. Residues Lys238 to Lys261 are compositionally biased toward basic and acidic residues. The interval Lys238 to Gln291 is disordered. Thr279 is modified (phosphothreonine). 2 positions are modified to phosphoserine: Ser344 and Ser347. The tract at residues Glu345–Gly379 is disordered. Residues Gly353 to Thr369 are compositionally biased toward polar residues. 3 positions are modified to phosphoserine: Ser380, Ser396, and Ser398. The helical transmembrane segment at Leu417–Phe440 threads the bilayer. Residues Phe424–Trp428 form an important for agonist binding region. Position 431 (Tyr431) interacts with histamine. An intrachain disulfide couples Cys441 to Cys444. At Cys441–Asn446 the chain is on the extracellular side. Residues Glu447 to Pro469 traverse the membrane as a helical segment. Residues Leu470 to Ser487 are Cytoplasmic-facing.

The protein belongs to the G-protein coupled receptor 1 family. In terms of processing, phosphorylation at sites in the second and third cytoplasmic loops independently contribute to agonist-induced receptor down-regulation.

The protein localises to the cell membrane. G-protein-coupled receptor for histamine, a biogenic amine that functions as an immune modulator and a neurotransmitter. Through the H1 receptor, histamine mediates the contraction of smooth muscles and increases capillary permeability due to contraction of terminal venules. Also mediates neurotransmission in the central nervous system and thereby regulates circadian rhythms, emotional and locomotor activities as well as cognitive functions. The polypeptide is Histamine H1 receptor (Homo sapiens (Human)).